Reading from the N-terminus, the 625-residue chain is 1-deoxy-D-xylulose-5-phosphate synthase (625 aa).

Thiamine diphosphate contacts are provided by residues H74 and 115 to 117; that span reads GHS. D146 is a binding site for Mg(2+). Thiamine diphosphate contacts are provided by residues 147-148, N175, Y286, and E367; that span reads GA. Mg(2+) is bound at residue N175.

Belongs to the transketolase family. DXPS subfamily. In terms of assembly, homodimer. It depends on Mg(2+) as a cofactor. The cofactor is thiamine diphosphate.

It catalyses the reaction D-glyceraldehyde 3-phosphate + pyruvate + H(+) = 1-deoxy-D-xylulose 5-phosphate + CO2. It participates in metabolic intermediate biosynthesis; 1-deoxy-D-xylulose 5-phosphate biosynthesis; 1-deoxy-D-xylulose 5-phosphate from D-glyceraldehyde 3-phosphate and pyruvate: step 1/1. In terms of biological role, catalyzes the acyloin condensation reaction between C atoms 2 and 3 of pyruvate and glyceraldehyde 3-phosphate to yield 1-deoxy-D-xylulose-5-phosphate (DXP). In Lachnoclostridium phytofermentans (strain ATCC 700394 / DSM 18823 / ISDg) (Clostridium phytofermentans), this protein is 1-deoxy-D-xylulose-5-phosphate synthase.